Reading from the N-terminus, the 202-residue chain is Matrix protein (202 aa).

The interval 12-33 (RDEDTQKPSPVSAPPDDDDLWL) is disordered. The short motif at 35–38 (PPEY) is the PPXY motif element. Residues 115-151 (KLRRTLIFQWADSRGPLEGEELEYSQEITWDDDTEFV) are essential for glycoprotein binding.

Belongs to the lyssavirus matrix protein family. In terms of assembly, homomultimer. Interacts with nucleoprotein and with the cytoplasmic domain of glycoprotein. Interacts with host ATP6V1A; this interaction plays an important role in virion uncoating after viral entry.

It localises to the virion membrane. It is found in the host endomembrane system. Its subcellular location is the host cytoplasm. Functionally, plays a major role in assembly, budding and uncoating of virion after membrane fusion. Completely covers the ribonucleoprotein coil and keep it in condensed bullet-shaped form. Inhibits viral transcription and stimulates replication. Plays a major role in early induction of TRAIL-mediated apoptosis in infected neurons. Inhibits the integrated stress response (ISR) in the infected cell by blocking the formation of stress granules. In Rabies virus (strain PM1503/AVO1) (RABV), this protein is Matrix protein (M).